Here is a 208-residue protein sequence, read N- to C-terminus: Small ribosomal subunit protein eS8 (208 aa).

The interval 1 to 33 (MGISRDHWHKRRATGGKRKPIRKKRKFELGRPA) is disordered. The segment covering 7–26 (HWHKRRATGGKRKPIRKKRK) has biased composition (basic residues).

The protein belongs to the eukaryotic ribosomal protein eS8 family.

The protein is Small ribosomal subunit protein eS8 (RpS8) of Apis mellifera (Honeybee).